The sequence spans 455 residues: L-serine dehydratase (455 aa).

It belongs to the iron-sulfur dependent L-serine dehydratase family. It depends on [4Fe-4S] cluster as a cofactor.

The catalysed reaction is L-serine = pyruvate + NH4(+). It participates in carbohydrate biosynthesis; gluconeogenesis. The polypeptide is L-serine dehydratase (sdaA) (Helicobacter pylori (strain J99 / ATCC 700824) (Campylobacter pylori J99)).